The sequence spans 217 residues: uncharacterized protein (217 aa).

A run of 2 helical transmembrane segments spans residues 151-171 (LIPF…HSLF) and 177-197 (ISFH…FILF).

The protein resides in the mitochondrion membrane. This is an uncharacterized protein from Schizosaccharomyces pombe (strain 972 / ATCC 24843) (Fission yeast).